Here is a 192-residue protein sequence, read N- to C-terminus: Orotate phosphoribosyltransferase (192 aa).

E116–S124 is a 5-phospho-alpha-D-ribose 1-diphosphate binding site. T120 and R148 together coordinate orotate.

Belongs to the purine/pyrimidine phosphoribosyltransferase family. PyrE subfamily. As to quaternary structure, homodimer. It depends on Mg(2+) as a cofactor.

It catalyses the reaction orotidine 5'-phosphate + diphosphate = orotate + 5-phospho-alpha-D-ribose 1-diphosphate. Its pathway is pyrimidine metabolism; UMP biosynthesis via de novo pathway; UMP from orotate: step 1/2. Catalyzes the transfer of a ribosyl phosphate group from 5-phosphoribose 1-diphosphate to orotate, leading to the formation of orotidine monophosphate (OMP). The protein is Orotate phosphoribosyltransferase of Bartonella henselae (strain ATCC 49882 / DSM 28221 / CCUG 30454 / Houston 1) (Rochalimaea henselae).